A 944-amino-acid polypeptide reads, in one-letter code: E3 ubiquitin-protein ligase HACE1 (944 aa).

7 ANK repeats span residues 23-55 (LPEDNETAVYTLMPMVMADQHRSVLELLSNSKF), 64-93 (VKRSLLHIAANCGSVECLVLLLKRGADPNY), 97-126 (SGCTPLHLAARNGQKKCMSKLLEYNADVNI), 130-159 (EGLTAIHWLAVNGRTELLHDLVQHVTNVDV), 163-192 (MGQTALHVACQNGHKTTVLCLLDSGADINR), 196-226 (SGATPLYFACSHGQRDTAQILLLRGAKYLPD), and 228-253 (NGVTPLDLCVQGGYGETCDILIQHHP). An HECT domain is found at 609–944 (NCEKLKQGIA…HCGSYGYTMA (336 aa)). Cys-911 serves as the catalytic Glycyl thioester intermediate.

Its subcellular location is the golgi apparatus. It localises to the golgi stack membrane. The protein resides in the cytoplasm. The protein localises to the endoplasmic reticulum. It catalyses the reaction S-ubiquitinyl-[E2 ubiquitin-conjugating enzyme]-L-cysteine + [acceptor protein]-L-lysine = [E2 ubiquitin-conjugating enzyme]-L-cysteine + N(6)-ubiquitinyl-[acceptor protein]-L-lysine.. It functions in the pathway protein modification; protein ubiquitination. In terms of biological role, E3 ubiquitin-protein ligase involved in Golgi membrane fusion and regulation of small GTPases. Acts as a regulator of Golgi membrane dynamics during the cell cycle: recruited to Golgi membrane by Rab proteins and regulates postmitotic Golgi membrane fusion. Acts by mediating ubiquitination during mitotic Golgi disassembly, ubiquitination serving as a signal for Golgi reassembly later, after cell division. In Xenopus laevis (African clawed frog), this protein is E3 ubiquitin-protein ligase HACE1 (hace1).